A 443-amino-acid chain; its full sequence is Ribosomal protein uS12 methylthiotransferase RimO (443 aa).

The 111-residue stretch at 8–118 (PKVGFVSLGC…VVNAVHEVVP (111 aa)) folds into the MTTase N-terminal domain. [4Fe-4S] cluster-binding residues include C17, C53, C82, C151, C155, and C158. In terms of domain architecture, Radical SAM core spans 137-376 (LTPRHYAYLK…AHQQAISSAR (240 aa)). One can recognise a TRAM domain in the interval 378–443 (QLRIGKEIEV…DEYDMWAEPV (66 aa)).

Belongs to the methylthiotransferase family. RimO subfamily. The cofactor is [4Fe-4S] cluster.

Its subcellular location is the cytoplasm. It catalyses the reaction L-aspartate(89)-[ribosomal protein uS12]-hydrogen + (sulfur carrier)-SH + AH2 + 2 S-adenosyl-L-methionine = 3-methylsulfanyl-L-aspartate(89)-[ribosomal protein uS12]-hydrogen + (sulfur carrier)-H + 5'-deoxyadenosine + L-methionine + A + S-adenosyl-L-homocysteine + 2 H(+). Its function is as follows. Catalyzes the methylthiolation of an aspartic acid residue of ribosomal protein uS12. In Pseudomonas putida (strain W619), this protein is Ribosomal protein uS12 methylthiotransferase RimO.